Reading from the N-terminus, the 324-residue chain is MKKEDLRIVYMGTPDFAVESLRALVEGGYNVVGVITMPDKPMGRHGSVLQPSAVKQYAVSVGLPVLQPEKLKDEAFLEELRALRADLQIVVAFRMLPEVVWNMPRLGTFNLHASLLPQYRGAAPINWAVINGDTETGVTTFFLTHEIDTGKIIRQRHLPIADTDDVETVHDALMAMGARLVTETVDLLLDGKTDAIPQEEFYKDAAELRPAPKIFKDTCHIDWNQPVKNIYDFVRGLSPYPAAWTELISEDGKRLALKIYQAEKRPAEHNFPVGSIHTDHKSYIDVAVKDGFLRLRSLQLAGKKRMNITDFLNGFKQIAEYTVG.

114 to 117 (SLLP) is a (6S)-5,6,7,8-tetrahydrofolate binding site.

The protein belongs to the Fmt family.

It catalyses the reaction L-methionyl-tRNA(fMet) + (6R)-10-formyltetrahydrofolate = N-formyl-L-methionyl-tRNA(fMet) + (6S)-5,6,7,8-tetrahydrofolate + H(+). Its function is as follows. Attaches a formyl group to the free amino group of methionyl-tRNA(fMet). The formyl group appears to play a dual role in the initiator identity of N-formylmethionyl-tRNA by promoting its recognition by IF2 and preventing the misappropriation of this tRNA by the elongation apparatus. The chain is Methionyl-tRNA formyltransferase from Parabacteroides distasonis (strain ATCC 8503 / DSM 20701 / CIP 104284 / JCM 5825 / NCTC 11152).